A 259-amino-acid chain; its full sequence is Pre-mRNA-splicing factor CWC24 (259 aa).

Positions 1-67 (MFRKRLVNKS…HENEGKLQKK (67 aa)) are disordered. A compositionally biased stretch (basic and acidic residues) spans 25–39 (FSEEKLVASDEEKGS). S33 is modified (phosphoserine). The span at 47-57 (KSGNSRTLQLS) shows a compositional bias: polar residues. Positions 58–67 (HENEGKLQKK) are enriched in basic and acidic residues. A Phosphoserine modification is found at S105. The C3H1-type zinc-finger motif lies at 138–166 (DFQPDVCKDYKQTGYCGYGDSCKFLHSRD). The segment at 199-237 (CTLCKEDYKSPVVTNCGHYFCGSCFAKDMKKGTKCFICH) adopts an RING-type zinc-finger fold.

The protein belongs to the CWC24 family. In terms of assembly, belongs to the CWC complex (or CEF1-associated complex), a spliceosome sub-complex reminiscent of a late-stage spliceosome composed of the U2, U5 and U6 snRNAs and at least BUD13, BUD31, BRR2, CDC40, CEF1, CLF1, CUS1, CWC2, CWC15, CWC21, CWC22, CWC23, CWC24, CWC25, CWC27, ECM2, HSH155, IST3, ISY1, LEA1, MSL1, NTC20, PRP8, PRP9, PRP11, PRP19, PRP21, PRP22, PRP45, PRP46, SLU7, SMB1, SMD1, SMD2, SMD3, SMX2, SMX3, SNT309, SNU114, SPP2, SYF1, SYF2, RSE1 and YJU2.

Its subcellular location is the nucleus. Its function is as follows. Involved in pre-mRNA splicing. This is Pre-mRNA-splicing factor CWC24 (CWC24) from Saccharomyces cerevisiae (strain ATCC 204508 / S288c) (Baker's yeast).